Reading from the N-terminus, the 241-residue chain is Methylthioribulose-1-phosphate dehydratase (241 aa).

The span at 1–11 shows a compositional bias: polar residues; that stretch reads MSSLCDTSNGE. A disordered region spans residues 1–20; the sequence is MSSLCDTSNGESHADPCQDK. Cys-96 is a substrate binding site. His-114 and His-116 together coordinate Zn(2+). Glu-138 functions as the Proton donor/acceptor in the catalytic mechanism. His-194 contacts Zn(2+).

Belongs to the aldolase class II family. MtnB subfamily. It depends on Zn(2+) as a cofactor.

The protein resides in the cytoplasm. The catalysed reaction is 5-(methylsulfanyl)-D-ribulose 1-phosphate = 5-methylsulfanyl-2,3-dioxopentyl phosphate + H2O. It participates in amino-acid biosynthesis; L-methionine biosynthesis via salvage pathway; L-methionine from S-methyl-5-thio-alpha-D-ribose 1-phosphate: step 2/6. In terms of biological role, catalyzes the dehydration of methylthioribulose-1-phosphate (MTRu-1-P) into 2,3-diketo-5-methylthiopentyl-1-phosphate (DK-MTP-1-P). Functions in the methionine salvage pathway. May play a role in apoptosis. The sequence is that of Methylthioribulose-1-phosphate dehydratase from Osmerus mordax (Rainbow smelt).